We begin with the raw amino-acid sequence, 92 residues long: Small ribosomal subunit protein uS19c (92 aa).

This sequence belongs to the universal ribosomal protein uS19 family.

Its subcellular location is the plastid. It is found in the chloroplast. Protein S19 forms a complex with S13 that binds strongly to the 16S ribosomal RNA. In Trieres chinensis (Marine centric diatom), this protein is Small ribosomal subunit protein uS19c (rps19).